The primary structure comprises 305 residues: Probable alpha-L-glutamate ligase (305 aa).

In terms of domain architecture, ATP-grasp spans 119–301 (LQVLAAQHIP…IAGLIIDYLL (183 aa)). ATP contacts are provided by residues Lys155, 192-193 (DF), Asp201, and 225-227 (RAN). The Mg(2+) site is built by Asp262, Glu274, and Asn276. Mn(2+) contacts are provided by Asp262, Glu274, and Asn276.

Belongs to the RimK family. Mg(2+) serves as cofactor. It depends on Mn(2+) as a cofactor.

This Haemophilus ducreyi (strain 35000HP / ATCC 700724) protein is Probable alpha-L-glutamate ligase.